The sequence spans 212 residues: MNQSLLSQFGTSEERVKRAIEAFKRGNGVLVLDDEDRENEGDLIFPAETITVEQMAKLIRYGSGIVCLCITDELCQQLDLSPMVQNNTSINQTAFTVSIEAAQGVSTGVSAQDRVTTIQAAIADNAKPQDLSRPGHVFPLRAKKGGVLARRGHTEAAVDLASWAGHKPAGVICEITNDDGSMARTPEIVEFGKKFNYPVVTIEDLVRYASNK.

D-ribulose 5-phosphate is bound by residues 37 to 38, aspartate 42, 150 to 154, and glutamate 174; these read RE and RRGHT. Glutamate 38 is a binding site for Mg(2+). Histidine 153 is a Mg(2+) binding site.

This sequence belongs to the DHBP synthase family. In terms of assembly, homodimer. Mg(2+) is required as a cofactor. Mn(2+) serves as cofactor.

It carries out the reaction D-ribulose 5-phosphate = (2S)-2-hydroxy-3-oxobutyl phosphate + formate + H(+). It participates in cofactor biosynthesis; riboflavin biosynthesis; 2-hydroxy-3-oxobutyl phosphate from D-ribulose 5-phosphate: step 1/1. Its function is as follows. Catalyzes the conversion of D-ribulose 5-phosphate to formate and 3,4-dihydroxy-2-butanone 4-phosphate. This Histophilus somni (strain 129Pt) (Haemophilus somnus) protein is 3,4-dihydroxy-2-butanone 4-phosphate synthase.